Here is a 324-residue protein sequence, read N- to C-terminus: D-alanine--D-alanine ligase (324 aa).

Residues 121–321 (NQYLKAFGVR…IKDVMTDIIE (201 aa)) form the ATP-grasp domain. Residue 149–204 (MEKIGLPCFIKPSLGGSSFGVTKVKTKEQIQPAIVKAFEEAQEVLVEAFMEGTELT) coordinates ATP. Mg(2+) is bound by residues Asp-275, Glu-288, and Asn-290.

This sequence belongs to the D-alanine--D-alanine ligase family. It depends on Mg(2+) as a cofactor. Mn(2+) serves as cofactor.

Its subcellular location is the cytoplasm. The enzyme catalyses 2 D-alanine + ATP = D-alanyl-D-alanine + ADP + phosphate + H(+). The protein operates within cell wall biogenesis; peptidoglycan biosynthesis. In terms of biological role, cell wall formation. The sequence is that of D-alanine--D-alanine ligase from Bacteroides thetaiotaomicron (strain ATCC 29148 / DSM 2079 / JCM 5827 / CCUG 10774 / NCTC 10582 / VPI-5482 / E50).